A 164-amino-acid polypeptide reads, in one-letter code: Phosphopantetheine adenylyltransferase (164 aa).

A substrate-binding site is contributed by serine 9. ATP contacts are provided by residues 9 to 10 (SF) and histidine 17. Residues lysine 41, leucine 73, and lysine 87 each contribute to the substrate site. ATP is bound by residues 88–90 (GLR), glutamate 98, and 123–129 (YSYISSS).

The protein belongs to the bacterial CoaD family. Homohexamer. It depends on Mg(2+) as a cofactor.

The protein resides in the cytoplasm. It carries out the reaction (R)-4'-phosphopantetheine + ATP + H(+) = 3'-dephospho-CoA + diphosphate. It functions in the pathway cofactor biosynthesis; coenzyme A biosynthesis; CoA from (R)-pantothenate: step 4/5. Its function is as follows. Reversibly transfers an adenylyl group from ATP to 4'-phosphopantetheine, yielding dephospho-CoA (dPCoA) and pyrophosphate. In Clostridium perfringens (strain SM101 / Type A), this protein is Phosphopantetheine adenylyltransferase.